Reading from the N-terminus, the 234-residue chain is MGAQWKVKHKEAAANAKGKIFGKLVKEITIAARNGADTATNAHLRLVVEQAKKASMPKETLDRAIKKGAGLLGETVQYHRVTYEGFAPHQVPLIVECVTDNINRTVAEIRVAFRKGQLGASGSVAWDFNHVGMIEASPDTPDADPEMAAIEAGAQDFEAGEEGATLFLTDPTDLDAVQKALPEQGFTVLSAKLGYQPKNPVSGLSDEQMAEVEAFLEGLDNHDDVQDMFVGLAG.

The protein belongs to the TACO1 family.

The protein localises to the cytoplasm. The polypeptide is Probable transcriptional regulatory protein Pfl01_3677 (Pseudomonas fluorescens (strain Pf0-1)).